We begin with the raw amino-acid sequence, 451 residues long: MIFSDWPWRHWRQVRGETIALRLNDEQLNWRELCARVDELASGFAVQGVVEGSGVMLRAWNTPQTLLAWLALLQCGARVLPVNPQLPQPLLEELLPNLTLQFALVPDGENTFPALTSLHIQLVEGAHAATWQPTRLCSMTLTSGSTGLPKAAVHTYQAHLASAQGVLSLIPFGDHDDWLLSLPLFHVSGQGIMWRWLYAGARMTVRDKQPLEQMLAGCTHASLVPTQLWRLLVNRSSVSLKAVLLGGAAIPVELTEQAREQGIRCFCGYGLTEFASTVCAKEADGLADVGSPLPGREVKIVNNEVWLRAASMAEGYWRNGQLVSLVNDEGWYATRDRGEMHNGKLTIVGRLDNLFFSGGEGIQPEEVERVIAAHPAVLQVFIVPVADKEFGHRPVAVMEYDHESVDLSEWVKDKLARFQQPVRWLTLPPELKNGGIKISRQALKEWVQRQQ.

The protein belongs to the ATP-dependent AMP-binding enzyme family. MenE subfamily.

The catalysed reaction is 2-succinylbenzoate + ATP + CoA = 2-succinylbenzoyl-CoA + AMP + diphosphate. Its pathway is quinol/quinone metabolism; 1,4-dihydroxy-2-naphthoate biosynthesis; 1,4-dihydroxy-2-naphthoate from chorismate: step 5/7. The protein operates within quinol/quinone metabolism; menaquinone biosynthesis. Its function is as follows. Converts 2-succinylbenzoate (OSB) to 2-succinylbenzoyl-CoA (OSB-CoA). This Escherichia coli (strain K12) protein is 2-succinylbenzoate--CoA ligase.